Reading from the N-terminus, the 900-residue chain is Isoleucine--tRNA ligase (900 aa).

The 'HIGH' region motif lies at 58 to 68; the sequence is PYANGNIHIGH. E552 provides a ligand contact to L-isoleucyl-5'-AMP. Residues 593–597 carry the 'KMSKS' region motif; the sequence is KMSKS. K596 contributes to the ATP binding site.

It belongs to the class-I aminoacyl-tRNA synthetase family. IleS type 1 subfamily. As to quaternary structure, monomer.

The protein resides in the cytoplasm. The catalysed reaction is tRNA(Ile) + L-isoleucine + ATP = L-isoleucyl-tRNA(Ile) + AMP + diphosphate. In terms of biological role, catalyzes the attachment of isoleucine to tRNA(Ile). As IleRS can inadvertently accommodate and process structurally similar amino acids such as valine, to avoid such errors it has two additional distinct tRNA(Ile)-dependent editing activities. One activity is designated as 'pretransfer' editing and involves the hydrolysis of activated Val-AMP. The other activity is designated 'posttransfer' editing and involves deacylation of mischarged Val-tRNA(Ile). The sequence is that of Isoleucine--tRNA ligase from Ureaplasma parvum serovar 3 (strain ATCC 700970).